The primary structure comprises 384 residues: Nodal homolog 2-B (384 aa).

Positions Met1–Gly18 are cleaved as a signal peptide. Residues Arg19–Arg283 constitute a propeptide that is removed on maturation. 3 N-linked (GlcNAc...) asparagine glycosylation sites follow: Asn71, Asn173, and Asn344. The cysteines at positions 306 and 372 are disulfide-linked.

The protein belongs to the TGF-beta family. Homodimer; disulfide-linked. Forms heterodimers with the TGF-beta family member derriere. Interacts with tsku; enhances nodal2 activity.

It is found in the secreted. Its function is as follows. Cooperation and regulatory loops of multiple nodals are essential for mesendoderm patterning in early embryos. Essential for mesoderm formation and axial patterning during embryonic development. Activates the activin-like signaling pathway to induce dorsal and ventral mesoderm in animal cap ectoderm. In addition, also dorsalizes ventral marginal zone (VMZ) tissues during gastrulation. Induces muscle actin. Appears to act as both a short-range and long-range morphogen. The unprocessed protein inhibits bmp- and wnt-signaling. In Xenopus laevis (African clawed frog), this protein is Nodal homolog 2-B (nodal2-b).